Consider the following 273-residue polypeptide: Probable membrane transporter protein YunE (273 aa).

Transmembrane regions (helical) follow at residues 3 to 23 (FVIL…IGLG), 50 to 70 (AIGT…LAYI), 81 to 101 (LIFF…SKLF), 105 to 125 (SFSV…MLKA), 157 to 177 (VGIA…IGGG), 185 to 205 (MLLF…IIFL), 222 to 242 (WLYA…GAAI), and 251 to 271 (IVMI…YEGI).

This sequence belongs to the 4-toluene sulfonate uptake permease (TSUP) (TC 2.A.102) family.

It localises to the cell membrane. The chain is Probable membrane transporter protein YunE (yunE) from Bacillus subtilis (strain 168).